Reading from the N-terminus, the 549-residue chain is Cytoplasmic trehalase (549 aa).

Residues arginine 168, 175 to 176, asparagine 212, 221 to 223, 292 to 294, and glycine 324 each bind substrate; these read WD, RSQ, and RDE. Active-site proton donor/acceptor residues include aspartate 326 and glutamate 509. Residue glutamate 525 participates in substrate binding.

The protein belongs to the glycosyl hydrolase 37 family. Monomer.

The protein localises to the cytoplasm. The catalysed reaction is alpha,alpha-trehalose + H2O = alpha-D-glucose + beta-D-glucose. The protein operates within glycan degradation; trehalose degradation; D-glucose from alpha,alpha-trehalose: step 1/1. Functionally, hydrolyzes trehalose to glucose. Could be involved, in cells returning to low osmolarity conditions, in the utilization of the accumulated cytoplasmic trehalose, which was synthesized in response to high osmolarity. This chain is Cytoplasmic trehalase, found in Salmonella schwarzengrund (strain CVM19633).